A 143-amino-acid chain; its full sequence is 3-hydroxyacyl-[acyl-carrier-protein] dehydratase FabZ (143 aa).

Residue histidine 47 is part of the active site.

It belongs to the thioester dehydratase family. FabZ subfamily.

The protein localises to the cytoplasm. It carries out the reaction a (3R)-hydroxyacyl-[ACP] = a (2E)-enoyl-[ACP] + H2O. Functionally, involved in unsaturated fatty acids biosynthesis. Catalyzes the dehydration of short chain beta-hydroxyacyl-ACPs and long chain saturated and unsaturated beta-hydroxyacyl-ACPs. In Moorella thermoacetica (strain ATCC 39073 / JCM 9320), this protein is 3-hydroxyacyl-[acyl-carrier-protein] dehydratase FabZ.